Here is a 405-residue protein sequence, read N- to C-terminus: Threonine synthase (405 aa).

An N6-(pyridoxal phosphate)lysine modification is found at Lys-106. Pyridoxal 5'-phosphate-binding positions include Asn-132, 233–237 (GNAGN), and Thr-371.

The protein belongs to the threonine synthase family. The cofactor is pyridoxal 5'-phosphate.

It catalyses the reaction O-phospho-L-homoserine + H2O = L-threonine + phosphate. It participates in amino-acid biosynthesis; L-threonine biosynthesis; L-threonine from L-aspartate: step 5/5. In terms of biological role, catalyzes the gamma-elimination of phosphate from L-phosphohomoserine and the beta-addition of water to produce L-threonine. The polypeptide is Threonine synthase (thrC) (Methanocaldococcus jannaschii (strain ATCC 43067 / DSM 2661 / JAL-1 / JCM 10045 / NBRC 100440) (Methanococcus jannaschii)).